Consider the following 505-residue polypeptide: Aspartyl/glutamyl-tRNA(Asn/Gln) amidotransferase subunit B (505 aa).

This sequence belongs to the GatB/GatE family. GatB subfamily. As to quaternary structure, heterotrimer of A, B and C subunits.

The enzyme catalyses L-glutamyl-tRNA(Gln) + L-glutamine + ATP + H2O = L-glutaminyl-tRNA(Gln) + L-glutamate + ADP + phosphate + H(+). It catalyses the reaction L-aspartyl-tRNA(Asn) + L-glutamine + ATP + H2O = L-asparaginyl-tRNA(Asn) + L-glutamate + ADP + phosphate + 2 H(+). Functionally, allows the formation of correctly charged Asn-tRNA(Asn) or Gln-tRNA(Gln) through the transamidation of misacylated Asp-tRNA(Asn) or Glu-tRNA(Gln) in organisms which lack either or both of asparaginyl-tRNA or glutaminyl-tRNA synthetases. The reaction takes place in the presence of glutamine and ATP through an activated phospho-Asp-tRNA(Asn) or phospho-Glu-tRNA(Gln). This chain is Aspartyl/glutamyl-tRNA(Asn/Gln) amidotransferase subunit B, found in Streptomyces avermitilis (strain ATCC 31267 / DSM 46492 / JCM 5070 / NBRC 14893 / NCIMB 12804 / NRRL 8165 / MA-4680).